We begin with the raw amino-acid sequence, 990 residues long: MPKREIEDTQSPYSSTGLVSTGESPKTSTSTPTSSTNNRAATTTTNNTSTTSTSLLKSNSNLQPIAMTPSVSSTSLAINKPKSQENKRRRVTRACDTCRQKKVKCDGKQPCIHCTVYSYKCSYDQPNIRNKKNSGIPIPSQPSPAILQVAAQAAVAFGSNNNSSNQQSLQSLQQQQQHVVHQHQHQPLPADEPIPKTNLIIFQQIINALLPKLQLNGFDPNLQFDLNKFQKVVQYVMSKSQTFTLNLNEITELMQDPDSQIPPPPPASSSSSHHRRTLSVGSFDDSSNSAVSSPREVGLHLPSKEVALNLIYTTWNKACVLFRFYHRPSLLEEVDLLYSLDPMNYGDRQQKFLPFLYSILACGSLFSKTPYTMGTPSENEKNLEDDGFKYFLEARKLIDISNVGDINSIQTVVMMIIYLQCSARLSTCYSYIGIALRSALKEGLHRNLTLFQNSKKKLDPIEEDTRKRLFYTIYKMDIYINSLLGLPRSLNEDEFDQLLPVELDDENVTRTEYLFDKQQGRLSSSGCANQHTKLMFILSHIIKKMYPIKVKPEEAENSSNVNYSRDRIHAKVTELEVELKNWLDNLPQELKPIDPSSTTKDVIDEVPEKFRLANYYLHLAFLNCQIILYRPFIHFISDSMDGSSSDPRSLIRGRNCIKVARMVVKLANKMIDHKLLLGTYWFSMYTIFFSIACLIYYFHFANYNNNGQGFNYAGILFDDDLNIDMIKKDIEIGKKVLDNLKNSSNSSLRIYNILNTMFEQLNRRTASRSRQVTATTNSTTTTANTNSNSNSNSQPTTLPANFQNVNVKNTFENFDNMNHFVKKERERERESLSQLFDNTSMAKFESSSEIPKNVANIQRVATPLEENNKEIGEVSGGNLTSNYMPGVFDKLDTQIFGKILPPYMLEKNETMNYNSNNNNSNNVNNNFNNNNNAGEVNNNSNGVAYNNNAANWPLNNAEDGLNLEDLFGTLGNNGNGGTSSSNGLEYLDPF.

A disordered region spans residues 1 to 88 (MPKREIEDTQ…NKPKSQENKR (88 aa)). Residues 9 to 23 (TQSPYSSTGLVSTGE) are compositionally biased toward polar residues. The span at 24–61 (SPKTSTSTPTSSTNNRAATTTTNNTSTTSTSLLKSNSN) shows a compositional bias: low complexity. A DNA-binding region (zn(2)-C6 fungal-type) is located at residues 95 to 121 (CDTCRQKKVKCDGKQPCIHCTVYSYKC). Low complexity-rich tracts occupy residues 160–179 (NNNSSNQQSLQSLQQQQQHV), 282–293 (SFDDSSNSAVSS), and 773–793 (TATTNSTTTTANTNSNSNSNS). Disordered stretches follow at residues 160 to 192 (NNNSSNQQSLQSLQQQQQHVVHQHQHQPLPADE), 255 to 295 (QDPD…SSPR), 764 to 800 (RTASRSRQVTATTNSTTTTANTNSNSNSNSQPTTLPA), and 915 to 944 (SNNNNSNNVNNNFNNNNNAGEVNNNSNGVA).

Belongs to the ASG1 family.

It is found in the nucleus. Its function is as follows. Transcription factor necessary to sustain growth on non-fermentative carbon sources such as sodium acetate, acetic acid, or ethanol. Plays a role in hyphal formation. The polypeptide is Activator of stress genes protein 1 (ASG1) (Candida albicans (strain SC5314 / ATCC MYA-2876) (Yeast)).